Consider the following 67-residue polypeptide: MPKMKTKSGAKKRFRVRPGGTVKRGQAFKRHILTKKTTKNKRQLRGSVAVHETNMGHMAQMLPGRGI.

Residues 1 to 16 (MPKMKTKSGAKKRFRV) show a composition bias toward basic residues. Residues 1 to 24 (MPKMKTKSGAKKRFRVRPGGTVKR) are disordered.

This sequence belongs to the bacterial ribosomal protein bL35 family.

This is Large ribosomal subunit protein bL35 from Polaromonas naphthalenivorans (strain CJ2).